The following is a 100-amino-acid chain: Osteocalcin (100 aa).

A signal peptide spans 1-23; it reads MRALTLLALLALAALCIAGQAGA. A propeptide spanning residues 24–51 is cleaved from the precursor; sequence KPSGAESSKGAAFVSKQEGSEVVKRPRR. Residues 52–98 enclose the Gla domain; sequence YLYQWLGAPVPYPDPLEPRREVCELNPDCDELADHIGFQEAYRRFYG. Residues glutamate 68, glutamate 72, glutamate 75, and aspartate 81 each contribute to the Ca(2+) site. Glutamate 68 carries the post-translational modification 4-carboxyglutamate; partial. A 4-carboxyglutamate mark is found at glutamate 72 and glutamate 75. The cysteines at positions 74 and 80 are disulfide-linked.

It belongs to the osteocalcin/matrix Gla protein family. In terms of processing, gamma-carboxyglutamate residues are formed by vitamin K dependent carboxylation by GGCX. These residues are essential for the binding of calcium. Decarboxylation promotes the hormone activity.

Its subcellular location is the secreted. In terms of biological role, bone protein that constitutes 1-2% of the total bone protein, and which acts as a negative regulator of bone formation. Functions to limit bone formation without impairing bone resorption or mineralization. It binds strongly to apatite and calcium. Functionally, the uncarboxylated form acts as a hormone secreted by osteoblasts, which regulates different cellular processes, such as energy metabolism, male fertility and brain development. Regulates of energy metabolism by acting as a hormone favoring pancreatic beta-cell proliferation, insulin secretion and sensitivity and energy expenditure. Uncarboxylated osteocalcin hormone also promotes testosterone production in the testes: acts as a ligand for G protein-coupled receptor GPRC6A at the surface of Leydig cells, initiating a signaling response that promotes the expression of enzymes required for testosterone synthesis in a CREB-dependent manner. Also acts as a regulator of brain development: osteocalcin hormone crosses the blood-brain barrier and acts as a ligand for GPR158 on neurons, initiating a signaling response that prevents neuronal apoptosis in the hippocampus, favors the synthesis of all monoamine neurotransmitters and inhibits that of gamma-aminobutyric acid (GABA). Osteocalcin also crosses the placenta during pregnancy and maternal osteocalcin is required for fetal brain development. This Homo sapiens (Human) protein is Osteocalcin (BGLAP).